Here is a 294-residue protein sequence, read N- to C-terminus: Protoheme IX farnesyltransferase 1 (294 aa).

9 helical membrane passes run 8–28 (VTKP…FLLA), 35–55 (PWLM…GCAI), 82–102 (AMAA…LLIA), 107–127 (AAVF…SLYM), 132–152 (VYGT…GYCA), 162–182 (LILL…IAIF), 208–228 (IVLY…SGYT), 229–249 (GAAF…MALR), and 263–283 (QVFA…AVDY).

Belongs to the UbiA prenyltransferase family. Protoheme IX farnesyltransferase subfamily.

It is found in the cell inner membrane. The enzyme catalyses heme b + (2E,6E)-farnesyl diphosphate + H2O = Fe(II)-heme o + diphosphate. It functions in the pathway porphyrin-containing compound metabolism; heme O biosynthesis; heme O from protoheme: step 1/1. Converts heme B (protoheme IX) to heme O by substitution of the vinyl group on carbon 2 of heme B porphyrin ring with a hydroxyethyl farnesyl side group. This chain is Protoheme IX farnesyltransferase 1, found in Pseudoalteromonas translucida (strain TAC 125).